Consider the following 234-residue polypeptide: Opacity protein V28 (234 aa).

Residue Ala-1 is a signal peptide.

The protein belongs to the opacity porin family.

The protein resides in the cell outer membrane. Implicated in a number of adherence functions. OPA proteins are implicated in pathogenesis and are subject to phase variation. The protein is Opacity protein V28 of Neisseria gonorrhoeae.